A 400-amino-acid polypeptide reads, in one-letter code: PHD finger protein 24 (400 aa).

Glycine 2 carries the N-myristoyl glycine lipid modification. A compositionally biased stretch (basic and acidic residues) spans 29–38 (RDRPSIRRGG). The tract at residues 29–65 (RDRPSIRRGGELPGSRRGTVEGSVQEVQEEKEAEASA) is disordered. An Omega-N-methylarginine modification is found at arginine 36. Serine 43 is subject to Phosphoserine. Position 47 is a phosphothreonine (threonine 47). Serine 51 carries the post-translational modification Phosphoserine. The PHD-type zinc-finger motif lies at 129–190 (NDEMCDVCEV…TGWSCYYCDN (62 aa)). Arginine 307 carries the post-translational modification Omega-N-methylarginine.

This Mus musculus (Mouse) protein is PHD finger protein 24.